A 262-amino-acid polypeptide reads, in one-letter code: Ribose-5-phosphate isomerase A (262 aa).

Substrate is bound by residues 33–36 (TGST), 89–92 (DGAD), and 102–105 (KGGG). Glu-111 functions as the Proton acceptor in the catalytic mechanism. A substrate-binding site is contributed by Lys-129.

Belongs to the ribose 5-phosphate isomerase family. As to quaternary structure, homodimer.

The catalysed reaction is aldehydo-D-ribose 5-phosphate = D-ribulose 5-phosphate. It functions in the pathway carbohydrate degradation; pentose phosphate pathway; D-ribose 5-phosphate from D-ribulose 5-phosphate (non-oxidative stage): step 1/1. Catalyzes the reversible conversion of ribose-5-phosphate to ribulose 5-phosphate. This Cereibacter sphaeroides (strain ATCC 17029 / ATH 2.4.9) (Rhodobacter sphaeroides) protein is Ribose-5-phosphate isomerase A.